A 418-amino-acid chain; its full sequence is Cyclin-dependent kinase 15 (418 aa).

Residues 84–369 (YLNLEKLGEG…AQDALLHPYF (286 aa)) enclose the Protein kinase domain. Residues 90-98 (LGEGTYATV) and lysine 113 contribute to the ATP site. Aspartate 205 functions as the Proton acceptor in the catalytic mechanism.

The protein belongs to the protein kinase superfamily. CMGC Ser/Thr protein kinase family. CDC2/CDKX subfamily. Mg(2+) is required as a cofactor.

It catalyses the reaction L-seryl-[protein] + ATP = O-phospho-L-seryl-[protein] + ADP + H(+). The catalysed reaction is L-threonyl-[protein] + ATP = O-phospho-L-threonyl-[protein] + ADP + H(+). Serine/threonine-protein kinase involved in the control of the eukaryotic cell cycle, whose activity is controlled by an associated cyclin. The protein is Cyclin-dependent kinase 15 (cdk15) of Danio rerio (Zebrafish).